Reading from the N-terminus, the 113-residue chain is Large ribosomal subunit protein uL24 (113 aa).

This sequence belongs to the universal ribosomal protein uL24 family. In terms of assembly, part of the 50S ribosomal subunit.

Functionally, one of two assembly initiator proteins, it binds directly to the 5'-end of the 23S rRNA, where it nucleates assembly of the 50S subunit. Its function is as follows. One of the proteins that surrounds the polypeptide exit tunnel on the outside of the subunit. The protein is Large ribosomal subunit protein uL24 of Synechococcus sp. (strain RCC307).